The sequence spans 312 residues: RNA pseudouridylate synthase domain-containing protein 1 (312 aa).

An N-acetylmethionine modification is found at Met1. Residue Asp67 is part of the active site. Residues 256 to 298 are disordered; it reads ATPDPDPEDRGPRPGSPSALLPGPGRPPPPPTKPPETEAQRGP. Residues 279 to 289 show a composition bias toward pro residues; the sequence is PGRPPPPPTKP.

This sequence belongs to the pseudouridine synthase RluA family.

This chain is RNA pseudouridylate synthase domain-containing protein 1 (RPUSD1), found in Homo sapiens (Human).